Reading from the N-terminus, the 883-residue chain is Bifunctional heparan sulfate N-deacetylase/N-sulfotransferase 2 (883 aa).

Over 1–18 (MLQLWKVVRPARQLELHR) the chain is Cytoplasmic. A helical; Signal-anchor for type II membrane protein membrane pass occupies residues 19 to 39 (LILLLIGFSLVSMGFLAYYVS). Over 40–883 (TSPKAKEPLP…REELQHSSVG (844 aa)) the chain is Lumenal. The heparan sulfate N-deacetylase 2 stretch occupies residues 41-597 (SPKAKEPLPL…KRHKDIWSKE (557 aa)). The tract at residues 49–82 (PLPLGDCSSSGAAGPGPARPPVPPRPQRPPETTR) is disordered. Residues 65 to 77 (PARPPVPPRPQRP) are compositionally biased toward pro residues. N-linked (GlcNAc...) asparagine glycosylation is found at Asn233, Asn350, and Asn400. Residues 598–883 (KTCDRLPKFL…REELQHSSVG (286 aa)) are heparan sulfate N-sulfotransferase 2. Lys613 serves as the catalytic For sulfotransferase activity. 613-617 (KTGTT) provides a ligand contact to 3'-phosphoadenylyl sulfate. A glycan (N-linked (GlcNAc...) asparagine) is linked at Asn666. 3'-phosphoadenylyl sulfate is bound at residue Ser711. N-linked (GlcNAc...) asparagine glycans are attached at residues Asn726 and Asn802. A disulfide bond links Cys817 and Cys827. 3'-phosphoadenylyl sulfate is bound at residue 832–836 (KGRRY).

Belongs to the sulfotransferase 1 family. NDST subfamily. Monomer. In terms of tissue distribution, widely expressed in adult and throughout development.

Its subcellular location is the golgi apparatus membrane. It carries out the reaction alpha-D-glucosaminyl-[heparan sulfate](n) + 3'-phosphoadenylyl sulfate = N-sulfo-alpha-D-glucosaminyl-[heparan sulfate](n) + adenosine 3',5'-bisphosphate + 2 H(+). The protein operates within glycan metabolism; heparan sulfate biosynthesis. Its pathway is glycan metabolism; heparin biosynthesis. Functionally, essential bifunctional enzyme that catalyzes both the N-deacetylation and the N-sulfation of glucosamine (GlcNAc) of the glycosaminoglycan in heparan sulfate. Modifies the GlcNAc-GlcA disaccharide repeating sugar backbone to make N-sulfated heparosan, a prerequisite substrate for later modifications in heparin biosynthesis. Plays a role in determining the extent and pattern of sulfation of heparan sulfate. Required for the exosomal release of SDCBP, CD63 and syndecan. The sequence is that of Bifunctional heparan sulfate N-deacetylase/N-sulfotransferase 2 (Ndst2) from Mus musculus (Mouse).